The following is a 430-amino-acid chain: Serine--tRNA ligase (430 aa).

236 to 238 (TAE) lines the L-serine pocket. Residue 267 to 269 (RRE) participates in ATP binding. Glu290 is an L-serine binding site. 354–357 (EISS) is an ATP binding site. Position 390 (Ser390) interacts with L-serine.

This sequence belongs to the class-II aminoacyl-tRNA synthetase family. Type-1 seryl-tRNA synthetase subfamily. In terms of assembly, homodimer. The tRNA molecule binds across the dimer.

It localises to the cytoplasm. The catalysed reaction is tRNA(Ser) + L-serine + ATP = L-seryl-tRNA(Ser) + AMP + diphosphate + H(+). It carries out the reaction tRNA(Sec) + L-serine + ATP = L-seryl-tRNA(Sec) + AMP + diphosphate + H(+). It functions in the pathway aminoacyl-tRNA biosynthesis; selenocysteinyl-tRNA(Sec) biosynthesis; L-seryl-tRNA(Sec) from L-serine and tRNA(Sec): step 1/1. Its function is as follows. Catalyzes the attachment of serine to tRNA(Ser). Is also able to aminoacylate tRNA(Sec) with serine, to form the misacylated tRNA L-seryl-tRNA(Sec), which will be further converted into selenocysteinyl-tRNA(Sec). In Gloeothece citriformis (strain PCC 7424) (Cyanothece sp. (strain PCC 7424)), this protein is Serine--tRNA ligase.